Consider the following 1627-residue polypeptide: Formin-like protein 5 (1627 aa).

A Phosphatase tensin-type domain is found at 5 to 194 (RKFFLKKTPD…HYITRQGSGP (190 aa)). The active-site Phosphocysteine intermediate is the Cys-127. A C2 tensin-type domain is found at 200–337 (SRPLILDSIV…FRAEVVFSDP (138 aa)). Disordered regions lie at residues 370–413 (EAEE…LEKH), 680–787 (TKRE…YDSS), 801–1181 (KFNV…RGVV), 1241–1261 (AAVP…SLGS), and 1571–1627 (KQAE…KDVG). Basic and acidic residues-rich tracts occupy residues 402-413 (VSREDSGSLEKH), 681-691 (KREESGGRRDV), 700-717 (IEAR…RQIP), and 726-742 (MPVD…EKLG). Pro residues-rich tracts occupy residues 824-835 (APPPPPPPPPPY), 852-870 (QPPP…PPPA), 877-886 (IPPPPPPPPL), 897-908 (VPPPPPPPPPPR), 931-965 (ISPP…PPSA), and 974-1168 (APPP…PPGG). An FH2 domain is found at 1188-1588 (FGAAAARKST…RAEKEAEAEK (401 aa)). Basic and acidic residues-rich tracts occupy residues 1248–1261 (DSSK…SLGS) and 1571–1590 (KQAE…EKSK). Over residues 1600 to 1611 (KPSNPSRQVKQT) the composition is skewed to polar residues. Residues 1612–1627 (PDTKTRAASRRGKDVG) show a composition bias toward basic and acidic residues.

It belongs to the formin-like family. Class-II subfamily.

The polypeptide is Formin-like protein 5 (FH5) (Oryza sativa subsp. japonica (Rice)).